The chain runs to 152 residues: Large ribosomal subunit protein bL9 (152 aa).

Belongs to the bacterial ribosomal protein bL9 family.

Functionally, binds to the 23S rRNA. The protein is Large ribosomal subunit protein bL9 of Synechococcus sp. (strain WH7803).